Here is a 173-residue protein sequence, read N- to C-terminus: Probable glutathione peroxidase 5 (173 aa).

G2 is lipidated: N-myristoyl glycine. C46 is a catalytic residue.

The protein belongs to the glutathione peroxidase family. Ubiquitous.

The protein resides in the cell membrane. The catalysed reaction is 2 glutathione + H2O2 = glutathione disulfide + 2 H2O. In terms of biological role, may constitute a glutathione peroxidase-like protective system against oxidative stresses. The sequence is that of Probable glutathione peroxidase 5 (GPX5) from Arabidopsis thaliana (Mouse-ear cress).